The chain runs to 457 residues: Cysteine--tRNA ligase (457 aa).

Position 31 (C31) interacts with Zn(2+). A 'HIGH' region motif is present at residues 33–43 (PTVYNYAHIGN). The Zn(2+) site is built by C211, H236, and E240. A 'KMSKS' region motif is present at residues 269-273 (KMSKS). ATP is bound at residue K272.

Belongs to the class-I aminoacyl-tRNA synthetase family. Monomer. Zn(2+) is required as a cofactor.

The protein resides in the cytoplasm. The enzyme catalyses tRNA(Cys) + L-cysteine + ATP = L-cysteinyl-tRNA(Cys) + AMP + diphosphate. The polypeptide is Cysteine--tRNA ligase (Xanthomonas campestris pv. campestris (strain ATCC 33913 / DSM 3586 / NCPPB 528 / LMG 568 / P 25)).